The following is a 287-amino-acid chain: 2-dehydro-3-deoxyphosphooctonate aldolase (287 aa).

The protein belongs to the KdsA family.

It is found in the cytoplasm. It catalyses the reaction D-arabinose 5-phosphate + phosphoenolpyruvate + H2O = 3-deoxy-alpha-D-manno-2-octulosonate-8-phosphate + phosphate. Its pathway is carbohydrate biosynthesis; 3-deoxy-D-manno-octulosonate biosynthesis; 3-deoxy-D-manno-octulosonate from D-ribulose 5-phosphate: step 2/3. It functions in the pathway bacterial outer membrane biogenesis; lipopolysaccharide biosynthesis. The protein is 2-dehydro-3-deoxyphosphooctonate aldolase of Rhodopseudomonas palustris (strain HaA2).